Here is a 78-residue protein sequence, read N- to C-terminus: Large ribosomal subunit protein bL28 (78 aa).

The tract at residues 1 to 23 (MSRVCQVSGKRVQTGNNVSHANN) is disordered. The span at 11 to 22 (RVQTGNNVSHAN) shows a compositional bias: polar residues.

This sequence belongs to the bacterial ribosomal protein bL28 family.

The chain is Large ribosomal subunit protein bL28 from Xanthomonas campestris pv. campestris (strain 8004).